A 199-amino-acid chain; its full sequence is MSLKQQLESDFEGHKRWALRRQMGIPNNRRLWVCACMDERLPVDDALGIRGDRGDAHVFRNAGGLITDDAIRSAMLTCNFFGTEEIVIINHTECGMMSAQTDTIVKALKDKGIDLDNLQLDPDLPELTLKAGMFGKWVKMYQDVDETCARQVEYMRNHPLIPKHVTISGWIWEVETGHLRPPHFRIGEKVNTNKAMGAK.

Cys-36, His-91, and Cys-94 together coordinate Zn(2+).

The protein belongs to the beta-class carbonic anhydrase family. In terms of assembly, exists as both octamers and hexadecamers in solution. The hexadecameric homooligomer may form a catenane, through interactions of two interlocked octameric rings. Zn(2+) serves as cofactor.

It carries out the reaction carbon disulfide + 2 H2O = 2 hydrogen sulfide + CO2 + 2 H(+). It functions in the pathway sulfur metabolism; hydrogen sulfide biosynthesis. Its function is as follows. Catalyzes the conversion of carbon disulfide into hydrogen sulfide and carbon dioxide, with carbonyl sulfide as an intermediate. Likely plays a key role in sulfur metabolism that allows A.thiooxidans G8 to grow on carbon disulfide as the main carbon and energy source. Does not show carbonic anhydrase activity (hydration of CO(2) to carbonate). In Acidithiobacillus thiooxidans (Thiobacillus thiooxidans), this protein is Carbon disulfide hydrolase.